Here is a 291-residue protein sequence, read N- to C-terminus: 4-hydroxy-tetrahydrodipicolinate synthase (291 aa).

Thr-47 provides a ligand contact to pyruvate. The Proton donor/acceptor role is filled by Tyr-134. Residue Lys-162 is the Schiff-base intermediate with substrate of the active site. Ile-205 contacts pyruvate.

The protein belongs to the DapA family. Homotetramer; dimer of dimers.

The protein localises to the cytoplasm. It carries out the reaction L-aspartate 4-semialdehyde + pyruvate = (2S,4S)-4-hydroxy-2,3,4,5-tetrahydrodipicolinate + H2O + H(+). The protein operates within amino-acid biosynthesis; L-lysine biosynthesis via DAP pathway; (S)-tetrahydrodipicolinate from L-aspartate: step 3/4. Catalyzes the condensation of (S)-aspartate-beta-semialdehyde [(S)-ASA] and pyruvate to 4-hydroxy-tetrahydrodipicolinate (HTPA). The protein is 4-hydroxy-tetrahydrodipicolinate synthase of Methanosphaerula palustris (strain ATCC BAA-1556 / DSM 19958 / E1-9c).